The chain runs to 142 residues: Hemoglobin subunit alpha (142 aa).

S1 carries the post-translational modification N-acetylserine. The 142-residue stretch at 1-142 folds into the Globin domain; it reads SLSDKDKAAV…VALALAERYR (142 aa). Residue H59 coordinates O2. Position 88 (H88) interacts with heme b.

Belongs to the globin family. Hb1 is a heterotetramer of two alpha chains and two beta chains. HbC is a heterotetramer of two alpha chains and two beta-C chains. Red blood cells.

Involved in oxygen transport from gills to the various peripheral tissues. The chain is Hemoglobin subunit alpha (hba) from Trematomus bernacchii (Emerald rockcod).